The following is a 209-amino-acid chain: MVGLVGGGGWRVGDDAAGGGGGGAVAAGAAAAAEAEHMRRLHSHAPGEHQCSSALVKHIKAPVHLVWSLVRSFDQPQRYKPFVSRCVVRGGDLEIGSVREVNVKTGLPATTSTERLELLDDDEHILSVKFVGGDHRLRNYSSIVTVHPESIDGRPGTLVIESFVVDVPDGNTKDETCYFVEAVIKCNLTSLAEVSERLAVQSPTSPLEQ.

Positions 44–196 (HAPGEHQCSS…NLTSLAEVSE (153 aa)) are START-like. A disulfide bond links C51 and C177. Abscisate contacts are provided by residues K80, 109-114 (ATTSTE), 136-142 (RLRNYSS), and E161. The Gate loop signature appears at 105–109 (TGLPA). A Latch loop motif is present at residues 135 to 137 (HRL).

It belongs to the PYR/PYL/RCAR abscisic acid intracellular receptor family. As to quaternary structure, monomer. Interacts with PP2C30. Binding to PP2C30 is dependent on the presence of abscisic acid (ABA). Interacts with PP2C51. Binding to PP2C51 is dependent on the presence of ABA. Interacts with PP2C50. Binding to PP2C50 is dependent on the presence of ABA. Interacts with PP2C53. Expressed in leaf sheaths and leaf blades. Expressed at low levels in roots, flowers and seeds.

The protein resides in the nucleus. The protein localises to the cytoplasm. It localises to the cytosol. Intracellular abscisic acid (ABA) receptor that functions as a positive regulator of ABA signaling pathway. Together with ABI5, PP2C30 and SAPK2, is part of an ABA signaling unit that modulates seed germination and early seedling growth. Acts as a positive regulator of abiotic stress-responsive gene expression. Inhibits the protein phosphatases PP2C06 and PP2C09 when activated by ABA. This is Abscisic acid receptor PYL5 from Oryza sativa subsp. japonica (Rice).